The chain runs to 1012 residues: Ubiquitin-activating enzyme E1 1 (1012 aa).

Arg22 serves as a coordination point for ATP. Ser264 carries the phosphoserine modification. Residues Ala437 and Asp463 each contribute to the ATP site. Residues Asp465 and Glu468 each contribute to the Mg(2+) site. ATP-binding residues include Asn471, Arg474, Lys487, Val513, Asp537, and Asn538. Residue Asp537 coordinates Mg(2+). Lys588 participates in a covalent cross-link: Glycyl lysine isopeptide (Lys-Gly) (interchain with G-Cter in ubiquitin). The Glycyl thioester intermediate role is filled by Cys593. Ser903 bears the Phosphoserine mark.

It belongs to the ubiquitin-activating E1 family. Monomer. Interacts with the E2 ubiquitin-conjugating enzyme ubc4.

The protein resides in the cytoplasm. The protein localises to the nucleus. It catalyses the reaction ATP + ubiquitin + [E1 ubiquitin-activating enzyme]-L-cysteine = AMP + diphosphate + S-ubiquitinyl-[E1 ubiquitin-activating enzyme]-L-cysteine.. It functions in the pathway protein modification; protein ubiquitination. With respect to regulation, ubiquitin transfer between the E1 ubiquitin-activating enzyme ptr3 and E2 ubiquitin-conjugating enzyme ubc4 is enhanced by the presence of magnesium and ATP, or adenylated ubiquitin. E1 ubiquitin-activating enzyme that catalyzes the first step in ubiquitin conjugation to mark cellular proteins for degradation through the ubiquitin-proteasome system. Activates ubiquitin by first adenylating its C-terminal glycine residue with ATP, and thereafter linking this residue to the side chain of a cysteine residue in E1, yielding a ubiquitin-E1 thioester and free AMP. This Schizosaccharomyces pombe (strain 972 / ATCC 24843) (Fission yeast) protein is Ubiquitin-activating enzyme E1 1 (ptr3).